Consider the following 179-residue polypeptide: Probable chorismate pyruvate-lyase (179 aa).

Residues Arg82, Leu120, and Glu165 each contribute to the substrate site.

This sequence belongs to the UbiC family.

Its subcellular location is the cytoplasm. It carries out the reaction chorismate = 4-hydroxybenzoate + pyruvate. Its pathway is cofactor biosynthesis; ubiquinone biosynthesis. Its function is as follows. Removes the pyruvyl group from chorismate, with concomitant aromatization of the ring, to provide 4-hydroxybenzoate (4HB) for the ubiquinone pathway. The sequence is that of Probable chorismate pyruvate-lyase from Vibrio vulnificus (strain YJ016).